The chain runs to 268 residues: Ribosomal RNA small subunit methyltransferase A (268 aa).

S-adenosyl-L-methionine-binding residues include Asn23, Ile25, Gly50, Glu72, Asp97, and Asn116.

Belongs to the class I-like SAM-binding methyltransferase superfamily. rRNA adenine N(6)-methyltransferase family. RsmA subfamily.

The protein localises to the cytoplasm. It catalyses the reaction adenosine(1518)/adenosine(1519) in 16S rRNA + 4 S-adenosyl-L-methionine = N(6)-dimethyladenosine(1518)/N(6)-dimethyladenosine(1519) in 16S rRNA + 4 S-adenosyl-L-homocysteine + 4 H(+). In terms of biological role, specifically dimethylates two adjacent adenosines (A1518 and A1519) in the loop of a conserved hairpin near the 3'-end of 16S rRNA in the 30S particle. May play a critical role in biogenesis of 30S subunits. This is Ribosomal RNA small subunit methyltransferase A from Rickettsia prowazekii (strain Madrid E).